The chain runs to 530 residues: Hyccin 2 (530 aa).

Residues Thr30 and Thr306 each carry the phosphothreonine modification. 2 positions are modified to phosphoserine: Ser321 and Ser341. The interval 328-404 (RREGAEGLNG…SNESPRDSVV (77 aa)) is disordered. Residues 353 to 373 (SGASLSSQPHGTKPPSSSQRG) are compositionally biased toward polar residues. Phosphoserine occurs at positions 430, 442, 444, and 491. The tract at residues 502 to 530 (EGKELLSPGAPLTKQSRSPSFNMQLISQV) is disordered. The span at 514–530 (TKQSRSPSFNMQLISQV) shows a compositional bias: polar residues.

The protein belongs to the Hyccin family. In terms of assembly, component of a phosphatidylinositol 4-kinase (PI4K) complex, composed of PI4KA, EFR3 (EFR3A or EFR3B), TTC7 (TTC7A or TTC7B) and HYCC (HYCC1 or HYCC2). Expressed in the central nervous system. Expressed at much lower level in oligodendrocytes than in neurons.

The protein localises to the cytoplasm. It is found in the cytosol. The protein resides in the cell membrane. Component of a complex required to localize phosphatidylinositol 4-kinase (PI4K) to the plasma membrane. This is Hyccin 2 (Hycc2) from Mus musculus (Mouse).